We begin with the raw amino-acid sequence, 192 residues long: Peptidyl-tRNA hydrolase (192 aa).

Tyrosine 14 contributes to the tRNA binding site. Histidine 19 (proton acceptor) is an active-site residue. The tRNA site is built by tyrosine 66 and asparagine 68.

The protein belongs to the PTH family. In terms of assembly, monomer.

The protein resides in the cytoplasm. It carries out the reaction an N-acyl-L-alpha-aminoacyl-tRNA + H2O = an N-acyl-L-amino acid + a tRNA + H(+). Its function is as follows. Hydrolyzes ribosome-free peptidyl-tRNAs (with 1 or more amino acids incorporated), which drop off the ribosome during protein synthesis, or as a result of ribosome stalling. Functionally, catalyzes the release of premature peptidyl moieties from peptidyl-tRNA molecules trapped in stalled 50S ribosomal subunits, and thus maintains levels of free tRNAs and 50S ribosomes. The sequence is that of Peptidyl-tRNA hydrolase from Coprothermobacter proteolyticus (strain ATCC 35245 / DSM 5265 / OCM 4 / BT).